The chain runs to 148 residues: 3-hydroxyacyl-[acyl-carrier-protein] dehydratase FabZ (148 aa).

The active site involves His-55.

It belongs to the thioester dehydratase family. FabZ subfamily.

The protein localises to the cytoplasm. It catalyses the reaction a (3R)-hydroxyacyl-[ACP] = a (2E)-enoyl-[ACP] + H2O. Involved in unsaturated fatty acids biosynthesis. Catalyzes the dehydration of short chain beta-hydroxyacyl-ACPs and long chain saturated and unsaturated beta-hydroxyacyl-ACPs. The sequence is that of 3-hydroxyacyl-[acyl-carrier-protein] dehydratase FabZ from Haemophilus influenzae (strain ATCC 51907 / DSM 11121 / KW20 / Rd).